The chain runs to 104 residues: Pyrimidine/purine nucleoside phosphorylase (104 aa).

Belongs to the nucleoside phosphorylase PpnP family.

The catalysed reaction is a purine D-ribonucleoside + phosphate = a purine nucleobase + alpha-D-ribose 1-phosphate. It catalyses the reaction adenosine + phosphate = alpha-D-ribose 1-phosphate + adenine. The enzyme catalyses cytidine + phosphate = cytosine + alpha-D-ribose 1-phosphate. It carries out the reaction guanosine + phosphate = alpha-D-ribose 1-phosphate + guanine. The catalysed reaction is inosine + phosphate = alpha-D-ribose 1-phosphate + hypoxanthine. It catalyses the reaction thymidine + phosphate = 2-deoxy-alpha-D-ribose 1-phosphate + thymine. The enzyme catalyses uridine + phosphate = alpha-D-ribose 1-phosphate + uracil. It carries out the reaction xanthosine + phosphate = alpha-D-ribose 1-phosphate + xanthine. Its function is as follows. Catalyzes the phosphorolysis of diverse nucleosides, yielding D-ribose 1-phosphate and the respective free bases. Can use uridine, adenosine, guanosine, cytidine, thymidine, inosine and xanthosine as substrates. Also catalyzes the reverse reactions. The sequence is that of Pyrimidine/purine nucleoside phosphorylase from Pelobacter propionicus (strain DSM 2379 / NBRC 103807 / OttBd1).